Here is a 447-residue protein sequence, read N- to C-terminus: NADH-ubiquinone oxidoreductase chain 4 (447 aa).

Helical transmembrane passes span 4 to 24 (LLLL…FMLF), 34 to 54 (LIIG…LNWI), 67 to 87 (MYSY…FISL), 100 to 120 (LLMI…FYLF), 149 to 169 (MFYT…IYLI), 189 to 209 (LFIY…FHGW), 223 to 243 (MILA…LMII), 248 to 268 (FILI…ILSL), 279 to 299 (IIAI…MTFL), 304 to 324 (IGGY…FFLV), 349 to 371 (MSLL…NLIS), 388 to 408 (LILM…FMFI), and 422 to 442 (GILV…LMFL).

The protein belongs to the complex I subunit 4 family.

The protein resides in the mitochondrion membrane. It catalyses the reaction a ubiquinone + NADH + 5 H(+)(in) = a ubiquinol + NAD(+) + 4 H(+)(out). In terms of biological role, core subunit of the mitochondrial membrane respiratory chain NADH dehydrogenase (Complex I) that is believed to belong to the minimal assembly required for catalysis. Complex I functions in the transfer of electrons from NADH to the respiratory chain. The immediate electron acceptor for the enzyme is believed to be ubiquinone. This is NADH-ubiquinone oxidoreductase chain 4 (ND4) from Apis mellifera ligustica (Common honeybee).